We begin with the raw amino-acid sequence, 152 residues long: Methylglyoxal synthase (152 aa).

Residues M1 to K152 enclose the MGS-like domain. Substrate is bound by residues H19, K23, T45–T48, and S65–G66. Residue D71 is the Proton donor/acceptor of the active site. H98 lines the substrate pocket.

It belongs to the methylglyoxal synthase family.

The enzyme catalyses dihydroxyacetone phosphate = methylglyoxal + phosphate. In terms of biological role, catalyzes the formation of methylglyoxal from dihydroxyacetone phosphate. This chain is Methylglyoxal synthase, found in Yersinia enterocolitica serotype O:8 / biotype 1B (strain NCTC 13174 / 8081).